A 316-amino-acid chain; its full sequence is Biotin synthase (316 aa).

In terms of domain architecture, Radical SAM core spans 38–266; the sequence is YKGKKIELCA…DKDIRVCGGR (229 aa). Cys-56, Cys-60, and Cys-63 together coordinate [4Fe-4S] cluster. Ser-100, Cys-131, Cys-191, and Arg-261 together coordinate [2Fe-2S] cluster.

This sequence belongs to the radical SAM superfamily. Biotin synthase family. Homodimer. The cofactor is [4Fe-4S] cluster. [2Fe-2S] cluster is required as a cofactor.

The catalysed reaction is (4R,5S)-dethiobiotin + (sulfur carrier)-SH + 2 reduced [2Fe-2S]-[ferredoxin] + 2 S-adenosyl-L-methionine = (sulfur carrier)-H + biotin + 2 5'-deoxyadenosine + 2 L-methionine + 2 oxidized [2Fe-2S]-[ferredoxin]. It participates in cofactor biosynthesis; biotin biosynthesis; biotin from 7,8-diaminononanoate: step 2/2. Its function is as follows. Catalyzes the conversion of dethiobiotin (DTB) to biotin by the insertion of a sulfur atom into dethiobiotin via a radical-based mechanism. The chain is Biotin synthase from Thermodesulfovibrio yellowstonii (strain ATCC 51303 / DSM 11347 / YP87).